Here is a 2124-residue protein sequence, read N- to C-terminus: AMB antimetabolite synthetase AmbE (2124 aa).

The adenylation stretch occupies residues 456-847 (LRAALQPQAP…LGRIDEQVKI (392 aa)). A methyltransferase region spans residues 950-1147 (DVGANIGLFS…DLLRRHGFEV (198 aa)). The 75-residue stretch at 1251 to 1325 (APANATEAAL…ELARLLAAPA (75 aa)) folds into the Carrier 1 domain. S1286 carries the O-(pantetheine 4'-phosphoryl)serine modification. A condensation region spans residues 1359–1780 (DAYPMTSLQQ…ALLGDPVQPP (422 aa)). Residues 1785-1859 (AEDSVELRRV…EVVRRCHAAD (75 aa)) enclose the Carrier 2 domain. Residue S1819 is modified to O-(pantetheine 4'-phosphoryl)serine. Residues 1886–2107 (RLIALPPAGG…AAEEVCAILR (222 aa)) form a thioesterase region.

This sequence belongs to the NRP synthetase family. Pantetheine 4'-phosphate serves as cofactor.

The catalysed reaction is holo-[peptidyl-carrier protein] + L-glutamate + ATP = L-glutamyl-[peptidyl-carrier protein] + AMP + diphosphate. Involved in the biosynthesis of the antimetabolite L-2-amino-4-methoxy-trans-3-butenoic acid (AMB), a non-proteinogenic amino acid which is toxic for prokaryotes and eukaryotes. Adenylates L-glutamate and loads it onto its first peptidyl carrier domain via a thioester linkage to the phosphopanthetheine moiety. The second peptidyl carrier domain is loaded with a L-alanine activated by AmbB. After formation by AmbB of the L-Glu-L-Ala dipeptide at the first carrier domain of AmbE, the condensation domain of AmbE probably condenses this dipeptide with the L-Ala residue attached at the second carrier domain of AmbE to give the L-Ala-L-Glu-L-Ala tripeptide. The central amino acid, L-Glu, would then undergo a series of modifications to be converted into AMB while the two flanking L-Ala residues remain in place. Finally, the L-Ala-AMB-L-Ala tripeptide is probably released by thioester cleavage via the thioester domain of AmbE. In Pseudomonas aeruginosa (strain ATCC 15692 / DSM 22644 / CIP 104116 / JCM 14847 / LMG 12228 / 1C / PRS 101 / PAO1), this protein is AMB antimetabolite synthetase AmbE.